Here is a 177-residue protein sequence, read N- to C-terminus: Adenine phosphoribosyltransferase (177 aa).

The protein belongs to the purine/pyrimidine phosphoribosyltransferase family. As to quaternary structure, homodimer.

It localises to the cytoplasm. It catalyses the reaction AMP + diphosphate = 5-phospho-alpha-D-ribose 1-diphosphate + adenine. It participates in purine metabolism; AMP biosynthesis via salvage pathway; AMP from adenine: step 1/1. Its function is as follows. Catalyzes a salvage reaction resulting in the formation of AMP, that is energically less costly than de novo synthesis. The protein is Adenine phosphoribosyltransferase of Rhodococcus opacus (strain B4).